The following is a 159-amino-acid chain: RNA pyrophosphohydrolase (159 aa).

A Nudix hydrolase domain is found at 6-149 (GFRPNVGIIL…KREVYRRALK (144 aa)). The short motif at 38–59 (GGINPDETPEDALYRELNEEVG) is the Nudix box element.

It belongs to the Nudix hydrolase family. RppH subfamily. The cofactor is a divalent metal cation.

Accelerates the degradation of transcripts by removing pyrophosphate from the 5'-end of triphosphorylated RNA, leading to a more labile monophosphorylated state that can stimulate subsequent ribonuclease cleavage. The chain is RNA pyrophosphohydrolase from Pseudomonas fluorescens (strain SBW25).